The sequence spans 242 residues: Uridylate kinase (242 aa).

11–14 (KLSG) contacts ATP. An involved in allosteric activation by GTP region spans residues 19-24 (GDKGVG). Glycine 53 serves as a coordination point for UMP. Glycine 54 and arginine 58 together coordinate ATP. Residues aspartate 73 and 134–141 (IGSPYFST) contribute to the UMP site. ATP-binding residues include asparagine 162, tyrosine 168, and aspartate 171.

It belongs to the UMP kinase family. As to quaternary structure, homohexamer.

It localises to the cytoplasm. The enzyme catalyses UMP + ATP = UDP + ADP. It participates in pyrimidine metabolism; CTP biosynthesis via de novo pathway; UDP from UMP (UMPK route): step 1/1. With respect to regulation, allosterically activated by GTP. Inhibited by UTP. In terms of biological role, catalyzes the reversible phosphorylation of UMP to UDP. The protein is Uridylate kinase of Streptococcus agalactiae serotype III (strain NEM316).